The primary structure comprises 408 residues: Arylacetamide deacetylase-like 3 (408 aa).

3 helical membrane-spanning segments follow: residues 2–22, 46–66, and 109–129; these read VVLALTLLVGSVAVFSLGSLL, ILSCLFHLTMTWGMIFEKLGL, and SSIPRLGIIFFHGGGTIIGSL. The Involved in the stabilization of the negatively charged intermediate by the formation of the oxyanion hole signature appears at 120 to 122; sequence HGG. Ser194 is a catalytic residue. A glycan (N-linked (GlcNAc...) asparagine) is linked at Asn321. Catalysis depends on residues Asp348 and His378.

The protein belongs to the 'GDXG' lipolytic enzyme family.

The protein resides in the membrane. This is Arylacetamide deacetylase-like 3 (Aadacl3) from Mus musculus (Mouse).